We begin with the raw amino-acid sequence, 365 residues long: MSIEIANIKKSFGRTQVLNDISLDIPSGQMVALLGPSGSGKTTLLRIIAGLEHQTSGHIRFHGTDVSRLHARDRKVGFVFQHYALFRHMTVFDNIAFGLTVLPRRERPNAAAIKAKVTKLLEMVQLAHLADRYPAQLSGGQKQRVALARALAVEPQILLLDEPFGALDAQVRKELRRWLRQLHEELKFTSVFVTHDQEEATEVADRVVVMSQGNIEQADAPDQVWREPATRFVLEFMGEVNRLQGTIRGGQFHVGAHRWPLGYTPAYQGPVDLFLRPWEVDISRRTSLDSPLPVQVLEASPKGHYTQLVVQPLGWYNEPLTVVMHGDDAPQRGDRLYVGLQHARLYNGDERIETRDEELALAQSA.

Residues 3 to 237 (IEIANIKKSF…PATRFVLEFM (235 aa)) enclose the ABC transporter domain. 35–42 (GPSGSGKT) provides a ligand contact to ATP.

The protein belongs to the ABC transporter superfamily. Sulfate/tungstate importer (TC 3.A.1.6) family. As to quaternary structure, the complex is composed of two ATP-binding proteins (CysA), two transmembrane proteins (CysT and CysW) and a solute-binding protein (CysP).

The protein localises to the cell inner membrane. The enzyme catalyses sulfate(out) + ATP + H2O = sulfate(in) + ADP + phosphate + H(+). It catalyses the reaction thiosulfate(out) + ATP + H2O = thiosulfate(in) + ADP + phosphate + H(+). Its function is as follows. Part of the ABC transporter complex CysAWTP involved in sulfate/thiosulfate import. Responsible for energy coupling to the transport system. In Escherichia coli O6:H1 (strain CFT073 / ATCC 700928 / UPEC), this protein is Sulfate/thiosulfate import ATP-binding protein CysA.